A 107-amino-acid polypeptide reads, in one-letter code: Ig kappa chain V-VI region XRPC 24 (107 aa).

The framework-1 stretch occupies residues 1-23 (EIVLTQSPAITAASLGQKVTITC). Residues cysteine 23 and cysteine 87 are joined by a disulfide bond. The complementarity-determining-1 stretch occupies residues 24–33 (SASSSVSYMH). The framework-2 stretch occupies residues 34 to 48 (WYQQKSGTSPKPWIY). Residues 49–55 (EISKLAS) form a complementarity-determining-2 region. The framework-3 stretch occupies residues 56 to 87 (GVPARFSGSGSGTSYSLTISSMEAEDAAIYYC). A complementarity-determining-3 region spans residues 88–96 (QQWNYPLIT). The framework-4 stretch occupies residues 97–106 (FGSGTKLEIK).

The chain is Ig kappa chain V-VI region XRPC 24 from Mus musculus (Mouse).